The sequence spans 220 residues: Kinetochore protein Spc25 (220 aa).

The stretch at 41–119 forms a coiled coil; the sequence is ILLDVKEAAA…NEIMERIHTL (79 aa).

The protein belongs to the SPC25 family. In terms of assembly, component of the Ndc80 complex, which is composed of Ndc80, Nuf2 and Spc25.

It localises to the nucleus. Its subcellular location is the chromosome. It is found in the centromere. The protein resides in the kinetochore. In terms of biological role, acts as a component of the essential kinetochore-associated Ndc80 complex, which is required for chromosome segregation and spindle checkpoint activity during meiosis and mitosis. Required for kinetochore integrity and the organization of stable microtubule binding sites in the outer plate of the kinetochore. Participates in SAC signaling that responds specifically to disruptions in spindle microtubule dynamics. The NDC80 complex synergistically enhances the affinity of the SKA1 complex for microtubules and may allow the NDC80 complex to track depolymerizing microtubules. The protein is Kinetochore protein Spc25 of Drosophila erecta (Fruit fly).